The sequence spans 782 residues: MNSQQEWEHAYSLAERMYNKQAPTKREELNPTERVICSRFETIFDYDPFKDEYTFRDQALLFSTPVQPKCRTVAEADLHELKENTAKLNIPMPSYINICPIYALLPFTVLVFNNSQHAHKSLSDDMERAAATFRNPHESEIVPGAMYIFKQKHGKAYRCIILSEDGDMNIPDAERKYLVAFIDNVQIVSVKQKTLFVSDQFSIKDYPCALHCARIVGISAIRKSYVSGMNQFILNFYDAKEKRKAGMFAFIYKLDKEEKKLVIDYPSLLGTPKTTSTEIRTAVGHQIVASKDPVSLTFEQLNKKEVPEFKYLNSTDDDSDVELDLIEHDTKSVNPVASSHPTSSSMDDCPYGRASIARAKDYQLRLPPHSQKGLSSSSLLGSSYPVSNSIKNDITKQSESNRADATNISFSSFESTKSDISPQNNQNVEETSTPTVPPNSTIQENEEDEIMSPASIIRAPSRLAGSLNKVSIERPNTPLPTSSKNSEHNMSEISTYEASSISSHHLVPQSPSVPKTNYTVPVVQRPLTAPEKFRDPFGGPGSSDILNTKMLCSEKNIVPSNKFGRQISPGKDDKNENYQYSRMETKPQTLFAPVLDENQRQSSSSNMMCQIPDISSVAQGSNAPKTAPNDSVNSVAPDDIHETDKRGNHCKSVTEDPKDNKDPTAVTTLEDPDINDENFSVQSICSETFVETDQKLMEVETGADAFTESITDQFAQMSEGLKKLAINLADSVRTAAIEKNHDAFIANIHAMEIISKKVPDDIDKRFWKMKIVEARKLEAAFD.

A Tudor; degenerate domain is found at 138–203 (ESEIVPGAMY…TLFVSDQFSI (66 aa)). Polar residues-rich tracts occupy residues 332 to 346 (SVNP…SSSM) and 413 to 443 (FEST…STIQ). Disordered regions lie at residues 332–351 (SVNP…DCPY), 413–448 (FEST…NEED), 472–492 (IERP…NMSE), and 617–672 (VAQG…LEDP). Residues 617-634 (VAQGSNAPKTAPNDSVNS) show a composition bias toward polar residues. A compositionally biased stretch (basic and acidic residues) spans 638–662 (DDIHETDKRGNHCKSVTEDPKDNKD).

It localises to the cytoplasm. It is found in the perinuclear region. This Caenorhabditis elegans protein is Hypersensitive to pore-forming toxin protein 40.